The chain runs to 425 residues: Dihydroorotase (425 aa).

His56 and His58 together coordinate Zn(2+). Substrate contacts are provided by residues 58–60 and Asn90; that span reads HYR. Zn(2+)-binding residues include Asp148, His175, and His228. Asn274 provides a ligand contact to substrate. Asp301 contacts Zn(2+). The active site involves Asp301. Residues His305 and 319–320 each bind substrate; that span reads FG.

The protein belongs to the metallo-dependent hydrolases superfamily. DHOase family. Class I DHOase subfamily. The cofactor is Zn(2+).

It catalyses the reaction (S)-dihydroorotate + H2O = N-carbamoyl-L-aspartate + H(+). It functions in the pathway pyrimidine metabolism; UMP biosynthesis via de novo pathway; (S)-dihydroorotate from bicarbonate: step 3/3. Functionally, catalyzes the reversible cyclization of carbamoyl aspartate to dihydroorotate. This is Dihydroorotase from Lactobacillus gasseri (strain ATCC 33323 / DSM 20243 / BCRC 14619 / CIP 102991 / JCM 1131 / KCTC 3163 / NCIMB 11718 / NCTC 13722 / AM63).